The sequence spans 195 residues: Imidazoleglycerol-phosphate dehydratase (195 aa).

It belongs to the imidazoleglycerol-phosphate dehydratase family.

The protein localises to the cytoplasm. It carries out the reaction D-erythro-1-(imidazol-4-yl)glycerol 3-phosphate = 3-(imidazol-4-yl)-2-oxopropyl phosphate + H2O. It functions in the pathway amino-acid biosynthesis; L-histidine biosynthesis; L-histidine from 5-phospho-alpha-D-ribose 1-diphosphate: step 6/9. This is Imidazoleglycerol-phosphate dehydratase from Clostridium botulinum (strain Alaska E43 / Type E3).